Reading from the N-terminus, the 369-residue chain is MKNAYYIGLMSGTSMDGVDAVLVDFSGAQPQLIASHTEAIPSHLLKGLQRLCLPSTDEINRLGRLDRNVGQLFALAVNNLLSKCTIAKEEVIAIGSHGQTVRHMPNLEVGFTLQIGDPNTIATETGIDVIADFRRKDIALGGQGAPLVPAFHQQTFAEVGKKRIILNIGGIANITYLPGNSDQVLGFDTGPGNTLVDAWIQQVKSEPFDRDGEWAASGKTDQGLLMQLLSHPYFSLAYPKSTGRELFNQAWLEQQLSPFNHLDEEDIQSTLLDLTCHSIAQDIIKLSNEGELFVCGGGAFNGQLMQRLAALLPGYKLDTTSALGVDPKWAEGIAFAWLAMRNHLGLPANLPAVTGASREAVLGGRFSAK.

An ATP-binding site is contributed by G12–D19.

Belongs to the anhydro-N-acetylmuramic acid kinase family.

The catalysed reaction is 1,6-anhydro-N-acetyl-beta-muramate + ATP + H2O = N-acetyl-D-muramate 6-phosphate + ADP + H(+). The protein operates within amino-sugar metabolism; 1,6-anhydro-N-acetylmuramate degradation. It participates in cell wall biogenesis; peptidoglycan recycling. Catalyzes the specific phosphorylation of 1,6-anhydro-N-acetylmuramic acid (anhMurNAc) with the simultaneous cleavage of the 1,6-anhydro ring, generating MurNAc-6-P. Is required for the utilization of anhMurNAc either imported from the medium or derived from its own cell wall murein, and thus plays a role in cell wall recycling. This chain is Anhydro-N-acetylmuramic acid kinase, found in Shewanella baltica (strain OS185).